A 341-amino-acid polypeptide reads, in one-letter code: L-threonine 3-dehydrogenase (341 aa).

C38 contacts Zn(2+). Residues T40 and H43 each act as charge relay system in the active site. The Zn(2+) site is built by H63, E64, C93, C96, C99, and C107. NAD(+) contacts are provided by residues I175, D195, R200, 262–264, and 286–287; these read LGI and IY.

The protein belongs to the zinc-containing alcohol dehydrogenase family. In terms of assembly, homotetramer. The cofactor is Zn(2+).

It localises to the cytoplasm. It carries out the reaction L-threonine + NAD(+) = (2S)-2-amino-3-oxobutanoate + NADH + H(+). Its pathway is amino-acid degradation; L-threonine degradation via oxydo-reductase pathway; glycine from L-threonine: step 1/2. In terms of biological role, catalyzes the NAD(+)-dependent oxidation of L-threonine to 2-amino-3-ketobutyrate. The polypeptide is L-threonine 3-dehydrogenase (Yersinia enterocolitica serotype O:8 / biotype 1B (strain NCTC 13174 / 8081)).